A 244-amino-acid chain; its full sequence is ATP synthase subunit a (244 aa).

Transmembrane regions (helical) follow at residues 17–37 (LSNV…AVLT), 74–94 (PFLA…MLGL), 112–132 (DPAI…YYGV), 148–168 (IPLL…TLGL), 171–191 (YGNI…ATNF), 196–216 (IALG…WQAF), and 217–237 (SLFV…VYIS).

Belongs to the ATPase A chain family. F-type ATPases have 2 components, CF(1) - the catalytic core - and CF(0) - the membrane proton channel. CF(1) has five subunits: alpha(3), beta(3), gamma(1), delta(1), epsilon(1). CF(0) has three main subunits: a(1), b(2) and c(9-12). The alpha and beta chains form an alternating ring which encloses part of the gamma chain. CF(1) is attached to CF(0) by a central stalk formed by the gamma and epsilon chains, while a peripheral stalk is formed by the delta and b chains.

It localises to the cell membrane. Its function is as follows. Key component of the proton channel; it plays a direct role in the translocation of protons across the membrane. This is ATP synthase subunit a from Bacillus pumilus (strain SAFR-032).